Reading from the N-terminus, the 317-residue chain is Taste receptor type 2 member 14 (317 aa).

The Extracellular portion of the chain corresponds to 1–7; the sequence is MGGVIKS. The helical transmembrane segment at 8-28 threads the bilayer; the sequence is IFTFVLIVEFIIGNLGNSFIA. At 29 to 55 the chain is on the cytoplasmic side; that stretch reads LVNCIDWVKGRKISSVDRILTALAISK. A helical transmembrane segment spans residues 56 to 76; it reads ISLVWLIFGSWCVSVFFPALF. The Extracellular segment spans residues 77–87; it reads ATEKMFRMLTN. Residues Thr86 and Trp89 each contribute to the cholesterol site. The helical transmembrane segment at 88–108 threads the bilayer; sequence IWTVINHFSVWLATGLGTFYF. Over 109 to 129 the chain is Cytoplasmic; the sequence is LKIANFSNSIFLYLKWRVKKV. A helical transmembrane segment spans residues 130–150; sequence VLVLLLVTSVFLFLNIALINI. The Extracellular segment spans residues 151-184; the sequence is HINASINGYRRNKTCSSDSSNFTRFSSLIVLTST. N-linked (GlcNAc...) asparagine glycans are attached at residues Asn153, Asn162, and Asn171. Val180 lines the cholesterol pocket. Residues 185 to 205 traverse the membrane as a helical segment; that stretch reads VFIFIPFTLSLAMFLLLIFSM. The Cytoplasmic segment spans residues 206–232; sequence WKHRKKMQHTVKRSGDASTKAHRGVKS. Residues 233 to 253 form a helical membrane-spanning segment; the sequence is MMTFFLLYAIFSLSFFISVWT. The Extracellular segment spans residues 254 to 261; it reads SERLEENL. A helical transmembrane segment spans residues 262–282; that stretch reads IILSQVMGMAYPSCHSCVLIL. Cholesterol is bound by residues Ser265 and Met268. Topologically, residues 283–317 are cytoplasmic; the sequence is GNKKLRQASLSVLLWLRYMFKDGEPSGHKEFRESS.

Belongs to the G-protein coupled receptor T2R family. Core component of the TAS2R14-GNAI1 complex, consisting of TAS2R14, GNAI1, GNB1 and GNG2; within the complex interacts with GNAI1. Core component of the TAS2R14-GNAT3 complex, consisting of TAS2R14, GNAT3, GNB1 and GNG2; within the complex interacts with GNAT3. Core component of the TAS2R14-GNAS2 complex, consisting of TAS2R14, GNAS2, GNB1 and GNG2; within the complex interacts with GNAS2.

It is found in the membrane. The enzyme catalyses Ca(2+)(in) = Ca(2+)(out). It carries out the reaction 3',5'-cyclic AMP(in) = 3',5'-cyclic AMP(out). With respect to regulation, basal activity is enhanced by binding to bitter tastants, such as flufenamic acid and aristolochic acid. Regulated by cholesterol in a concentration-dependent manner. In terms of biological role, gustducin-linked G-protein coupled receptor that plays a role in the perception of bitterness. The activity of this receptor stimulates GNAT3, activating the gustducin G-protein pathway. Likely plays a role in sensing the chemical composition of the gastrointestinal content and other extra-oral tissues via the inhibitory G-protein pathways. In Pan paniscus (Pygmy chimpanzee), this protein is Taste receptor type 2 member 14 (TAS2R14).